Consider the following 301-residue polypeptide: Acetylglutamate kinase (301 aa).

Substrate contacts are provided by residues 68–69, arginine 90, and asparagine 195; that span reads GG.

The protein belongs to the acetylglutamate kinase family. ArgB subfamily.

Its subcellular location is the cytoplasm. The enzyme catalyses N-acetyl-L-glutamate + ATP = N-acetyl-L-glutamyl 5-phosphate + ADP. It participates in amino-acid biosynthesis; L-arginine biosynthesis; N(2)-acetyl-L-ornithine from L-glutamate: step 2/4. Its function is as follows. Catalyzes the ATP-dependent phosphorylation of N-acetyl-L-glutamate. The protein is Acetylglutamate kinase of Ectopseudomonas mendocina (strain ymp) (Pseudomonas mendocina).